Here is a 355-residue protein sequence, read N- to C-terminus: Methionine import ATP-binding protein MetN (355 aa).

Residues Leu8–Ile250 enclose the ABC transporter domain. Gly42–Ser49 serves as a coordination point for ATP.

The protein belongs to the ABC transporter superfamily. Methionine importer (TC 3.A.1.24) family. The complex is composed of two ATP-binding proteins (MetN), two transmembrane proteins (MetI) and a solute-binding protein (MetQ).

It is found in the cell membrane. It carries out the reaction L-methionine(out) + ATP + H2O = L-methionine(in) + ADP + phosphate + H(+). The enzyme catalyses D-methionine(out) + ATP + H2O = D-methionine(in) + ADP + phosphate + H(+). Part of the ABC transporter complex MetNIQ involved in methionine import. Responsible for energy coupling to the transport system. This Streptococcus thermophilus (strain ATCC BAA-250 / LMG 18311) protein is Methionine import ATP-binding protein MetN.